A 430-amino-acid polypeptide reads, in one-letter code: Serine--tRNA ligase (430 aa).

236–238 (TAE) serves as a coordination point for L-serine. 267–269 (RSE) is a binding site for ATP. Glutamate 290 lines the L-serine pocket. Residue 354–357 (EISS) participates in ATP binding. Serine 390 contacts L-serine.

The protein belongs to the class-II aminoacyl-tRNA synthetase family. Type-1 seryl-tRNA synthetase subfamily. As to quaternary structure, homodimer. The tRNA molecule binds across the dimer.

It is found in the cytoplasm. It carries out the reaction tRNA(Ser) + L-serine + ATP = L-seryl-tRNA(Ser) + AMP + diphosphate + H(+). It catalyses the reaction tRNA(Sec) + L-serine + ATP = L-seryl-tRNA(Sec) + AMP + diphosphate + H(+). Its pathway is aminoacyl-tRNA biosynthesis; selenocysteinyl-tRNA(Sec) biosynthesis; L-seryl-tRNA(Sec) from L-serine and tRNA(Sec): step 1/1. In terms of biological role, catalyzes the attachment of serine to tRNA(Ser). Is also able to aminoacylate tRNA(Sec) with serine, to form the misacylated tRNA L-seryl-tRNA(Sec), which will be further converted into selenocysteinyl-tRNA(Sec). The sequence is that of Serine--tRNA ligase from Mannheimia succiniciproducens (strain KCTC 0769BP / MBEL55E).